The chain runs to 233 residues: Uracil-DNA glycosylase (233 aa).

Residue D70 is the Proton acceptor of the active site.

This sequence belongs to the uracil-DNA glycosylase (UDG) superfamily. UNG family.

It is found in the cytoplasm. The enzyme catalyses Hydrolyzes single-stranded DNA or mismatched double-stranded DNA and polynucleotides, releasing free uracil.. Its function is as follows. Excises uracil residues from the DNA which can arise as a result of misincorporation of dUMP residues by DNA polymerase or due to deamination of cytosine. The sequence is that of Uracil-DNA glycosylase from Helicobacter pylori (strain Shi470).